Here is a 445-residue protein sequence, read N- to C-terminus: tRNA modification GTPase MnmE (445 aa).

Arginine 21, glutamate 78, and lysine 117 together coordinate (6S)-5-formyl-5,6,7,8-tetrahydrofolate. The TrmE-type G domain maps to 213-370 (GFRIALVGAP…LKETLSERVV (158 aa)). GTP contacts are provided by residues 223-228 (NAGKST), 242-248 (TATPGTT), and 267-270 (DTAG). Mg(2+)-binding residues include serine 227 and threonine 248. Residue lysine 445 coordinates (6S)-5-formyl-5,6,7,8-tetrahydrofolate.

Belongs to the TRAFAC class TrmE-Era-EngA-EngB-Septin-like GTPase superfamily. TrmE GTPase family. Homodimer. Heterotetramer of two MnmE and two MnmG subunits. It depends on K(+) as a cofactor.

Its subcellular location is the cytoplasm. In terms of biological role, exhibits a very high intrinsic GTPase hydrolysis rate. Involved in the addition of a carboxymethylaminomethyl (cmnm) group at the wobble position (U34) of certain tRNAs, forming tRNA-cmnm(5)s(2)U34. The polypeptide is tRNA modification GTPase MnmE (Phenylobacterium zucineum (strain HLK1)).